Reading from the N-terminus, the 635-residue chain is Threonine--tRNA ligase (635 aa).

The TGS domain maps to 1 to 61; it reads MINISFPDGS…DNDCRLRILT (61 aa). The tract at residues 242 to 533 is catalytic; it reads DHRKLGKELD…LIEEYAGRFP (292 aa). Zn(2+) is bound by residues Cys333, His384, and His510.

Belongs to the class-II aminoacyl-tRNA synthetase family. In terms of assembly, homodimer. It depends on Zn(2+) as a cofactor.

The protein localises to the cytoplasm. It carries out the reaction tRNA(Thr) + L-threonine + ATP = L-threonyl-tRNA(Thr) + AMP + diphosphate + H(+). Functionally, catalyzes the attachment of threonine to tRNA(Thr) in a two-step reaction: L-threonine is first activated by ATP to form Thr-AMP and then transferred to the acceptor end of tRNA(Thr). Also edits incorrectly charged L-seryl-tRNA(Thr). The protein is Threonine--tRNA ligase of Rickettsia bellii (strain RML369-C).